A 125-amino-acid chain; its full sequence is Basic leucine zipper transcriptional factor ATF-like (125 aa).

Residues 1–14 (MPHSSDSSDSSFSR) are compositionally biased toward low complexity. The tract at residues 1–58 (MPHSSDSSDSSFSRSPPPGKQDSSDDVRKVQRREKNRIAAQKSRQRQTQKADTLHLES) is disordered. The 64-residue stretch at 26–89 (DVRKVQRREK…KYFTSVLSSH (64 aa)) folds into the bZIP domain. Positions 28 to 50 (RKVQRREKNRIAAQKSRQRQTQK) are basic motif. Ser43 is subject to Phosphoserine. Position 48 is a phosphothreonine (Thr48). Residues 54–75 (LHLESEDLEKQNAALRKEIKQL) form a leucine-zipper region.

It belongs to the bZIP family. Heterodimer; mainly heterodimerizes with JUNB. The BATF-JUNB heterodimer interacts with IRF4 and IRF8. Interacts (via bZIP domain) with IRF4 and IRF8; the interaction is direct. Also forms heterodimers with JUN and JUND. Interacts with IFI35. In terms of processing, phosphorylated on serine and threonine residues and at least one tyrosine residue. Phosphorylation at Ser-43 inhibit DNA binding activity and transforms it as a negative regulator of AP-1 mediated transcription.

It is found in the nucleus. The protein resides in the cytoplasm. Functionally, AP-1 family transcription factor that controls the differentiation of lineage-specific cells in the immune system: specifically mediates the differentiation of T-helper 17 cells (Th17), follicular T-helper cells (TfH), CD8(+) dendritic cells and class-switch recombination (CSR) in B-cells. Acts via the formation of a heterodimer with JUNB that recognizes and binds DNA sequence 5'-TGA[CG]TCA-3'. The BATF-JUNB heterodimer also forms a complex with IRF4 (or IRF8) in immune cells, leading to recognition of AICE sequence (5'-TGAnTCA/GAAA-3'), an immune-specific regulatory element, followed by cooperative binding of BATF and IRF4 (or IRF8) and activation of genes. Controls differentiation of T-helper cells producing interleukin-17 (Th17 cells) by binding to Th17-associated gene promoters: regulates expression of the transcription factor RORC itself and RORC target genes such as IL17 (IL17A or IL17B). Also involved in differentiation of follicular T-helper cells (TfH) by directing expression of BCL6 and MAF. In B-cells, involved in class-switch recombination (CSR) by controlling the expression of both AICDA and of germline transcripts of the intervening heavy-chain region and constant heavy-chain region (I(H)-C(H)). Following infection, can participate in CD8(+) dendritic cell differentiation via interaction with IRF4 and IRF8 to mediate cooperative gene activation. Regulates effector CD8(+) T-cell differentiation by regulating expression of SIRT1. Following DNA damage, part of a differentiation checkpoint that limits self-renewal of hematopoietic stem cells (HSCs): up-regulated by STAT3, leading to differentiation of HSCs, thereby restricting self-renewal of HSCs. The protein is Basic leucine zipper transcriptional factor ATF-like (BATF) of Bos taurus (Bovine).